Consider the following 696-residue polypeptide: Methionine--tRNA ligase (696 aa).

Positions 12-22 (PYANGPLHLGH) match the 'HIGH' region motif. Cysteine 143, cysteine 146, cysteine 156, and cysteine 159 together coordinate Zn(2+). The 'KMSKS' region signature appears at 330 to 334 (KMSKS). Residue lysine 333 coordinates ATP. Residues 593-696 (DFAKLDLRIG…AGAQPGMPVR (104 aa)) enclose the tRNA-binding domain.

Belongs to the class-I aminoacyl-tRNA synthetase family. MetG type 1 subfamily. In terms of assembly, homodimer. Requires Zn(2+) as cofactor.

It is found in the cytoplasm. It carries out the reaction tRNA(Met) + L-methionine + ATP = L-methionyl-tRNA(Met) + AMP + diphosphate. Its function is as follows. Is required not only for elongation of protein synthesis but also for the initiation of all mRNA translation through initiator tRNA(fMet) aminoacylation. The protein is Methionine--tRNA ligase of Xanthomonas campestris pv. campestris (strain 8004).